Reading from the N-terminus, the 381-residue chain is L-lactate dehydrogenase A-like 6B (381 aa).

NAD(+)-binding positions include 101–106 (DLDEDK) and Arg-148. Residues Arg-155, Asn-187, and Arg-218 each contribute to the substrate site. Asn-187 serves as a coordination point for NAD(+). His-242 acts as the Proton acceptor in catalysis. Substrate is bound at residue Thr-297.

The protein belongs to the LDH/MDH superfamily. LDH family. As to expression, testis specific.

The catalysed reaction is (S)-lactate + NAD(+) = pyruvate + NADH + H(+). It participates in fermentation; pyruvate fermentation to lactate; (S)-lactate from pyruvate: step 1/1. This is L-lactate dehydrogenase A-like 6B (LDHAL6B) from Homo sapiens (Human).